The sequence spans 548 residues: Palmitoyltransferase pfa3 (548 aa).

The Cytoplasmic segment spans residues 1 to 32 (MMATLATSPPTSPTWPKRRPRAWALRCERYCC). A helical membrane pass occupies residues 33–53 (AAATYFPLAFVYSLTTWAVYV). Residues 54 to 70 (EASIGLKPSRSPWIGLP) are Extracellular-facing. The chain crosses the membrane as a helical span at residues 71–91 (TSILGVLLYICLNASYTVAVF). The Cytoplasmic segment spans residues 92 to 173 (TDPGSPLTTG…ATCVGLYNYK (82 aa)). Positions 130–180 (RYCKKCQCPKPDRAHHCSTCKRCVLKMDHHCPWLATCVGLYNYKAFLLFLI) constitute a DHHC domain. A helical membrane pass occupies residues 174 to 194 (AFLLFLIYTSLFCWVDFAVSA). The Extracellular segment spans residues 195–215 (TWIWTEVFNDAPYLETMLPVN). Residues 216-236 (VVLLAILGGIIGLVLTGFTAW) traverse the membrane as a helical segment. The Cytoplasmic portion of the chain corresponds to 237–548 (HISLAVRGMT…EDSSEWRDWD (312 aa)). Disordered regions lie at residues 313 to 339 (RAEEGEERLSPAPEQPASHGVSDDQLT) and 463 to 548 (NPHQ…RDWD). Residues 508 to 535 (DPLNQQSVPANGAVNQLQKANEASSATT) show a composition bias toward polar residues. The segment covering 536–548 (NRREDSSEWRDWD) has biased composition (basic and acidic residues).

Belongs to the DHHC palmitoyltransferase family. PFA3 subfamily. Autopalmitoylated.

The protein resides in the vacuole membrane. It catalyses the reaction L-cysteinyl-[protein] + hexadecanoyl-CoA = S-hexadecanoyl-L-cysteinyl-[protein] + CoA. In terms of biological role, palmitoyltransferase specific for VAC8. Palmitoylates VAC8 at one or more of its N-terminal cysteine residues, which is required for its proper membrane localization. This is Palmitoyltransferase pfa3 (pfa3) from Aspergillus fumigatus (strain ATCC MYA-4609 / CBS 101355 / FGSC A1100 / Af293) (Neosartorya fumigata).